We begin with the raw amino-acid sequence, 92 residues long: CRISPR-associated endoribonuclease Cas2 3 (92 aa).

Asp-9 contributes to the Mg(2+) binding site.

It belongs to the CRISPR-associated endoribonuclease Cas2 protein family. Homodimer, forms a heterotetramer with a Cas1 homodimer. Mg(2+) serves as cofactor.

Its function is as follows. CRISPR (clustered regularly interspaced short palindromic repeat), is an adaptive immune system that provides protection against mobile genetic elements (viruses, transposable elements and conjugative plasmids). CRISPR clusters contain sequences complementary to antecedent mobile elements and target invading nucleic acids. CRISPR clusters are transcribed and processed into CRISPR RNA (crRNA). Functions as a ssRNA-specific endoribonuclease. Involved in the integration of spacer DNA into the CRISPR cassette. In Synechocystis sp. (strain ATCC 27184 / PCC 6803 / Kazusa), this protein is CRISPR-associated endoribonuclease Cas2 3.